A 592-amino-acid chain; its full sequence is Thiol:disulfide interchange protein DsbD (592 aa).

Positions 1-19 are cleaved as a signal peptide; sequence MKLIASFSIFMLMSIWSFA. Intrachain disulfides connect Cys-130/Cys-136 and Cys-204/Cys-326. The next 8 membrane-spanning stretches (helical) occupy residues 186 to 206, 229 to 249, 265 to 285, 318 to 338, 345 to 365, 379 to 399, 406 to 426, and 440 to 460; these read IWVL…PCVF, FVLS…LGLV, IILG…FGAW, ISGL…LLYI, LLGF…LILF, WMNI…LMFV, MATD…FYVM, and ALVI…TIFG. Residues 443–592 form the Thioredoxin domain; the sequence is IFIGLFASAM…AFAAHAKNIL (150 aa). A disulfide bond links Cys-508 and Cys-511.

It belongs to the thioredoxin family. DsbD subfamily.

The protein localises to the cell inner membrane. The enzyme catalyses [protein]-dithiol + NAD(+) = [protein]-disulfide + NADH + H(+). The catalysed reaction is [protein]-dithiol + NADP(+) = [protein]-disulfide + NADPH + H(+). Functionally, required to facilitate the formation of correct disulfide bonds in some periplasmic proteins and for the assembly of the periplasmic c-type cytochromes. Acts by transferring electrons from cytoplasmic thioredoxin to the periplasm. This transfer involves a cascade of disulfide bond formation and reduction steps. This Pseudoalteromonas atlantica (strain T6c / ATCC BAA-1087) protein is Thiol:disulfide interchange protein DsbD.